The primary structure comprises 2273 residues: Linear gramicidin synthase subunit A (2273 aa).

The segment at 1–144 is GART; that stretch reads MRILFLTTFM…AIEELFIREW (144 aa). 2 Carrier domains span residues 693 to 767 and 1724 to 1798; these read APTD…TEQK and APRT…TSEQ. An O-(pantetheine 4'-phosphoryl)serine mark is found at Ser728 and Ser1759.

The protein belongs to the ATP-dependent AMP-binding enzyme family. In terms of assembly, large multienzyme complex composed of 4 subunits; LgrA, LgrB, LgrC and LgrD. Pantetheine 4'-phosphate serves as cofactor.

In terms of biological role, activates valine (or leucine, but much less frequently), and then glycine and catalyzes the formation of the peptide bond in the first step of peptide synthesis. This enzyme may also play a role in N-formylation of the first amino acid residue in the synthesized dipeptide. The chain is Linear gramicidin synthase subunit A (lgrA) from Brevibacillus parabrevis.